The following is a 110-amino-acid chain: MPGAGLFIFVAAALCEIGGCFAFWAWLRLGKSPLWAVGGVGLLILFAWLLTRVDSAAAGRAFAAYGGIYICASLGWMWAVEGGRPDRWDLIGVLLCAVGSAVILLGPRTA.

4 helical membrane passes run 6–26, 29–49, 61–81, and 90–110; these read LFIF…FWAW, LGKS…FAWL, AFAA…WAVE, and LIGV…PRTA.

Belongs to the UPF0060 family.

Its subcellular location is the cell inner membrane. In Rhizorhabdus wittichii (strain DSM 6014 / CCUG 31198 / JCM 15750 / NBRC 105917 / EY 4224 / RW1) (Sphingomonas wittichii), this protein is UPF0060 membrane protein Swit_0423.